Consider the following 72-residue polypeptide: Translation initiation factor IF-1 (72 aa).

The region spanning 1–72 (MAKDDVIEVE…TRGRITYRYK (72 aa)) is the S1-like domain. Residue tyrosine 60 is modified to Phosphotyrosine.

This sequence belongs to the IF-1 family. In terms of assembly, component of the 30S ribosomal translation pre-initiation complex which assembles on the 30S ribosome in the order IF-2 and IF-3, IF-1 and N-formylmethionyl-tRNA(fMet); mRNA recruitment can occur at any time during PIC assembly.

It localises to the cytoplasm. Functionally, one of the essential components for the initiation of protein synthesis. Stabilizes the binding of IF-2 and IF-3 on the 30S subunit to which N-formylmethionyl-tRNA(fMet) subsequently binds. Helps modulate mRNA selection, yielding the 30S pre-initiation complex (PIC). Upon addition of the 50S ribosomal subunit IF-1, IF-2 and IF-3 are released leaving the mature 70S translation initiation complex. In Bacillus licheniformis (strain ATCC 14580 / DSM 13 / JCM 2505 / CCUG 7422 / NBRC 12200 / NCIMB 9375 / NCTC 10341 / NRRL NRS-1264 / Gibson 46), this protein is Translation initiation factor IF-1.